Reading from the N-terminus, the 527-residue chain is Pyruvate kinase 2, cytosolic (527 aa).

Arg-58 is a binding site for substrate. The K(+) site is built by Asp-60, Ser-62, Asp-92, and Thr-93. Residue 60–63 coordinates ATP; the sequence is DFSW. Residue Lys-256 coordinates substrate. Residue Glu-258 coordinates Mg(2+). Gly-281, Asn-282, and Thr-313 together coordinate substrate. Asn-282 is a Mg(2+) binding site.

This sequence belongs to the pyruvate kinase family. In terms of assembly, homotetramer. Mg(2+) is required as a cofactor. K(+) serves as cofactor.

The protein localises to the cytoplasm. Its subcellular location is the cytosol. The enzyme catalyses pyruvate + ATP = phosphoenolpyruvate + ADP + H(+). The protein operates within carbohydrate degradation; glycolysis; pyruvate from D-glyceraldehyde 3-phosphate: step 5/5. Its function is as follows. Key regulatory enzyme of the glycolytic pathway that catalyzes the final step of glycolysis, converting ADP and phosphoenolpyruvate (PEP) to ATP and pyruvate by essentially irreversible transphosphorylation. In Oryza sativa subsp. indica (Rice), this protein is Pyruvate kinase 2, cytosolic.